The primary structure comprises 259 residues: Leucine-rich repeat-containing protein 61 (259 aa).

LRR repeat units lie at residues 32 to 53 (SILL…GECL), 54 to 75 (GLEW…ASLR), 76 to 97 (QLAV…ATCE), and 98 to 119 (NLQS…QCLA). In terms of domain architecture, LRRCT spans 138–178 (NPLCANPSYWAAVRELLPGLKVIDGERVIGRGSEFYQLCRD).

The polypeptide is Leucine-rich repeat-containing protein 61 (LRRC61) (Homo sapiens (Human)).